A 391-amino-acid polypeptide reads, in one-letter code: Nuclear hormone receptor family member nhr-218 (391 aa).

Residues 17–93 (PIPCQICTYQ…MGMKAEKIQQ (77 aa)) constitute a DNA-binding region (nuclear receptor). NR C4-type zinc fingers lie at residues 20-40 (CQIC…CRAC) and 56-76 (CKTR…CRLC). The NR LBD domain occupies 146–391 (SRNYSDSPLT…DNFCNLFAMK (246 aa)).

The protein belongs to the nuclear hormone receptor family.

Its subcellular location is the nucleus. In terms of biological role, orphan nuclear receptor. This is Nuclear hormone receptor family member nhr-218 (nhr-218) from Caenorhabditis elegans.